The sequence spans 430 residues: Aspartate aminotransferase, mitochondrial (430 aa).

The N-terminal 28 residues, 1 to 28 (MALAMMIRNAASKRGMTPISGHFGGLRS), are a transit peptide targeting the mitochondrion. Residues G65, W160, and N213 each contribute to the L-aspartate site. At K277 the chain carries N6-(pyridoxal phosphate)lysine. An L-aspartate-binding site is contributed by R405.

The protein belongs to the class-I pyridoxal-phosphate-dependent aminotransferase family. In terms of assembly, homodimer. The cofactor is pyridoxal 5'-phosphate.

It localises to the mitochondrion matrix. The catalysed reaction is L-aspartate + 2-oxoglutarate = oxaloacetate + L-glutamate. Functionally, amino acid aminotransferase important for the metabolism of amino acids and Krebs-cycle related organic acids. No activity with D-Asp or D-Ala as amino donors. In plants, it is involved in nitrogen metabolism and in aspects of carbon and energy metabolism. The protein is Aspartate aminotransferase, mitochondrial (ASP1) of Arabidopsis thaliana (Mouse-ear cress).